The primary structure comprises 346 residues: Heat-inducible transcription repressor HrcA (346 aa).

It belongs to the HrcA family.

Functionally, negative regulator of class I heat shock genes (grpE-dnaK-dnaJ and groELS operons). Prevents heat-shock induction of these operons. This chain is Heat-inducible transcription repressor HrcA, found in Pediococcus pentosaceus (strain ATCC 25745 / CCUG 21536 / LMG 10740 / 183-1w).